Here is a 540-residue protein sequence, read N- to C-terminus: CTP synthase (540 aa).

An amidoligase domain region spans residues 1-273 (MNNKDLKTKF…DDFILQHFKL (273 aa)). Position 19 (serine 19) interacts with CTP. Residue serine 19 participates in UTP binding. 20 to 25 (SLGKGI) contributes to the ATP binding site. Residue tyrosine 60 participates in L-glutamine binding. Aspartate 77 provides a ligand contact to ATP. 2 residues coordinate Mg(2+): aspartate 77 and glutamate 147. Residues 154 to 156 (DIE), 194 to 199 (KTKPTQ), and lysine 230 each bind CTP. UTP-binding positions include 194–199 (KTKPTQ) and lysine 230. One can recognise a Glutamine amidotransferase type-1 domain in the interval 306–539 (YIVLHDAYLS…VEASLLNQKN (234 aa)). Residue glycine 361 coordinates L-glutamine. Cysteine 388 (nucleophile; for glutamine hydrolysis) is an active-site residue. L-glutamine-binding positions include 389–392 (LGMQ), glutamate 412, and arginine 466. Active-site residues include histidine 512 and glutamate 514.

This sequence belongs to the CTP synthase family. Homotetramer.

The enzyme catalyses UTP + L-glutamine + ATP + H2O = CTP + L-glutamate + ADP + phosphate + 2 H(+). It carries out the reaction L-glutamine + H2O = L-glutamate + NH4(+). It catalyses the reaction UTP + NH4(+) + ATP = CTP + ADP + phosphate + 2 H(+). It functions in the pathway pyrimidine metabolism; CTP biosynthesis via de novo pathway; CTP from UDP: step 2/2. Allosterically activated by GTP, when glutamine is the substrate; GTP has no effect on the reaction when ammonia is the substrate. The allosteric effector GTP functions by stabilizing the protein conformation that binds the tetrahedral intermediate(s) formed during glutamine hydrolysis. Inhibited by the product CTP, via allosteric rather than competitive inhibition. Its function is as follows. Catalyzes the ATP-dependent amination of UTP to CTP with either L-glutamine or ammonia as the source of nitrogen. Regulates intracellular CTP levels through interactions with the four ribonucleotide triphosphates. The protein is CTP synthase of Onion yellows phytoplasma (strain OY-M).